The sequence spans 206 residues: Large ribosomal subunit protein uL4 (206 aa).

The segment at Gly-46–Glu-95 is disordered. Over residues Ser-59–Gly-70 the composition is skewed to basic residues.

Belongs to the universal ribosomal protein uL4 family. As to quaternary structure, part of the 50S ribosomal subunit.

In terms of biological role, one of the primary rRNA binding proteins, this protein initially binds near the 5'-end of the 23S rRNA. It is important during the early stages of 50S assembly. It makes multiple contacts with different domains of the 23S rRNA in the assembled 50S subunit and ribosome. Forms part of the polypeptide exit tunnel. The polypeptide is Large ribosomal subunit protein uL4 (Neisseria meningitidis serogroup C (strain 053442)).